The chain runs to 191 residues: 3-hydroxyanthranilate 3,4-dioxygenase 2 (191 aa).

Residue Arg-48 participates in O2 binding. Fe cation is bound by residues His-52, Glu-73, and His-111. Glu-73 contributes to the substrate binding site. Substrate-binding residues include Arg-115 and Glu-125.

The protein belongs to the 3-HAO family. It depends on Fe(2+) as a cofactor.

It is found in the cytoplasm. The enzyme catalyses 3-hydroxyanthranilate + O2 = (2Z,4Z)-2-amino-3-carboxymuconate 6-semialdehyde. The protein operates within cofactor biosynthesis; NAD(+) biosynthesis; quinolinate from L-kynurenine: step 3/3. Functionally, catalyzes the oxidative ring opening of 3-hydroxyanthranilate to 2-amino-3-carboxymuconate semialdehyde, which spontaneously cyclizes to quinolinate. In Aspergillus clavatus (strain ATCC 1007 / CBS 513.65 / DSM 816 / NCTC 3887 / NRRL 1 / QM 1276 / 107), this protein is 3-hydroxyanthranilate 3,4-dioxygenase 2 (bna1-2).